We begin with the raw amino-acid sequence, 563 residues long: Tripeptidyl-peptidase 1 (563 aa).

The signal sequence occupies residues 1-19 (MGLQARFLGLLALVIAGKC). A propeptide spans 20-195 (THSPEPDQRW…PEPQGVGPVG (176 aa)) (removed in mature form). A disulfide bridge links Cys111 with Cys122. A Peptidase S53 domain is found at 199-563 (GVTPSVLRQR…PALLKTLLNP (365 aa)). Residues Asn210 and Asn222 are each glycosylated (N-linked (GlcNAc...) asparagine). Residues Glu272 and Asp276 each act as charge relay system in the active site. N-linked (GlcNAc...) asparagine glycans are attached at residues Asn286, Asn313, and Asn443. 2 cysteine pairs are disulfide-bonded: Cys365-Cys526 and Cys522-Cys537. The Charge relay system role is filled by Ser475. 2 residues coordinate Ca(2+): Asp517 and Val518. Residues Gly539, Gly541, and Asp543 each contribute to the Ca(2+) site.

Monomer. Interacts with CLN5. Interacts with CLN3. Requires Ca(2+) as cofactor. Post-translationally, activated by autocatalytic proteolytical processing upon acidification. N-glycosylation is required for processing and activity.

It is found in the lysosome. It localises to the melanosome. The catalysed reaction is Release of an N-terminal tripeptide from a polypeptide, but also has endopeptidase activity.. Functionally, lysosomal serine protease with tripeptidyl-peptidase I activity. May act as a non-specific lysosomal peptidase which generates tripeptides from the breakdown products produced by lysosomal proteinases. Requires substrates with an unsubstituted N-terminus. The polypeptide is Tripeptidyl-peptidase 1 (Tpp1) (Rattus norvegicus (Rat)).